Consider the following 170-residue polypeptide: NADH-quinone oxidoreductase subunit J (170 aa).

Transmembrane regions (helical) follow at residues 1–21 (MEFV…FVII), 30–50 (VYLI…GAFF), 56–76 (VIIY…MLNI), 94–114 (IGPS…IFFL), and 138–158 (VFLV…IFHI).

Belongs to the complex I subunit 6 family. Composed of 13 different subunits. Subunits NuoA, H, J, K, L, M, N constitute the membrane sector of the complex.

It is found in the cell membrane. The enzyme catalyses a quinone + NADH + 5 H(+)(in) = a quinol + NAD(+) + 4 H(+)(out). Its function is as follows. NDH-1 shuttles electrons from NADH, via FMN and iron-sulfur (Fe-S) centers, to quinones in the respiratory chain. Couples the redox reaction to proton translocation (for every two electrons transferred, four hydrogen ions are translocated across the cytoplasmic membrane), and thus conserves the redox energy in a proton gradient. The polypeptide is NADH-quinone oxidoreductase subunit J (nuoJ) (Buchnera aphidicola subsp. Acyrthosiphon pisum (strain APS) (Acyrthosiphon pisum symbiotic bacterium)).